Reading from the N-terminus, the 359-residue chain is NAC transcription factor 47 (359 aa).

In terms of domain architecture, NAC spans 10–186 (LPPGFRFHPT…DWVLCRIYKK (177 aa)). Residues 112-192 (IGIKKALVFY…IYKKSHASLS (81 aa)) mediate DNA binding. 2 disordered regions span residues 147–166 (KRINSSRSGGSEVNNNFGDR) and 200–226 (TSNQEHEENDNEPFVDRGTFLPNLQND). Positions 148–165 (RINSSRSGGSEVNNNFGD) are enriched in polar residues.

Its subcellular location is the nucleus. In terms of biological role, transcription factor that binds to the promoter of ACO5, an ACC oxidase involved in ethylene biosynthesis. Mediates waterlogging-induced hyponastic leaf movement, and cell expansion in abaxial cells of the basal petiole region, by directly regulating the expression of ACO5. Required for normal seed development and morphology. This Arabidopsis thaliana (Mouse-ear cress) protein is NAC transcription factor 47.